Reading from the N-terminus, the 714-residue chain is Polyribonucleotide nucleotidyltransferase (714 aa).

Mg(2+)-binding residues include Asp-489 and Asp-495. The region spanning 556–615 (PKIDTIKIDVDKIKVVIGKGGETIDKIIAETGVKIDIDEEGNVSIYSSDQDAINRAKEII) is the KH domain. The region spanning 625–693 (GEVYHAKVVR…DKGRIDASMK (69 aa)) is the S1 motif domain. Positions 691-714 (SMKALVPRPPKPEKSEAKKEGKHD) are disordered. Positions 700–714 (PKPEKSEAKKEGKHD) are enriched in basic and acidic residues.

The protein belongs to the polyribonucleotide nucleotidyltransferase family. The cofactor is Mg(2+).

The protein localises to the cytoplasm. The enzyme catalyses RNA(n+1) + phosphate = RNA(n) + a ribonucleoside 5'-diphosphate. Its function is as follows. Involved in mRNA degradation. Catalyzes the phosphorolysis of single-stranded polyribonucleotides processively in the 3'- to 5'-direction. The chain is Polyribonucleotide nucleotidyltransferase from Streptococcus equi subsp. zooepidemicus (strain MGCS10565).